Here is a 716-residue protein sequence, read N- to C-terminus: Putative proline--tRNA ligase C19C7.06 (716 aa).

A disordered region spans residues lysine 655–glycine 675.

The protein belongs to the class-II aminoacyl-tRNA synthetase family.

Its subcellular location is the cytoplasm. The enzyme catalyses tRNA(Pro) + L-proline + ATP = L-prolyl-tRNA(Pro) + AMP + diphosphate. In Schizosaccharomyces pombe (strain 972 / ATCC 24843) (Fission yeast), this protein is Putative proline--tRNA ligase C19C7.06 (prs1).